The primary structure comprises 206 residues: Recombination protein RecR (206 aa).

The segment at 58 to 73 (CENCHNISDVAVCEIC) adopts a C4-type zinc-finger fold. In terms of domain architecture, Toprim spans 81–176 (QIVCVVEDVR…ITSSIARGIS (96 aa)).

This sequence belongs to the RecR family.

In terms of biological role, may play a role in DNA repair. It seems to be involved in an RecBC-independent recombinational process of DNA repair. It may act with RecF and RecO. This chain is Recombination protein RecR, found in Flavobacterium psychrophilum (strain ATCC 49511 / DSM 21280 / CIP 103535 / JIP02/86).